A 346-amino-acid chain; its full sequence is Holliday junction branch migration complex subunit RuvB (346 aa).

A compositionally biased stretch (basic and acidic residues) spans 1–16 (MSDADRLITPEKRGED). The segment at 1-23 (MSDADRLITPEKRGEDIDTTLRP) is disordered. A large ATPase domain (RuvB-L) region spans residues 1-182 (MSDADRLITP…FGIPVRLAFY (182 aa)). ATP-binding positions include Leu-21, Arg-22, Gly-63, Lys-66, Thr-67, Thr-68, 129 to 131 (EDF), Arg-172, Tyr-182, and Arg-219. Residue Thr-67 participates in Mg(2+) binding. Residues 183–253 (TVDELELIVR…IADEALTRLL (71 aa)) are small ATPAse domain (RuvB-S). Residues 256–346 (NMGLDQLDMR…AQFRLTLEDD (91 aa)) are head domain (RuvB-H). Positions 292, 311, and 316 each coordinate DNA.

This sequence belongs to the RuvB family. Homohexamer. Forms an RuvA(8)-RuvB(12)-Holliday junction (HJ) complex. HJ DNA is sandwiched between 2 RuvA tetramers; dsDNA enters through RuvA and exits via RuvB. An RuvB hexamer assembles on each DNA strand where it exits the tetramer. Each RuvB hexamer is contacted by two RuvA subunits (via domain III) on 2 adjacent RuvB subunits; this complex drives branch migration. In the full resolvosome a probable DNA-RuvA(4)-RuvB(12)-RuvC(2) complex forms which resolves the HJ.

Its subcellular location is the cytoplasm. It carries out the reaction ATP + H2O = ADP + phosphate + H(+). Functionally, the RuvA-RuvB-RuvC complex processes Holliday junction (HJ) DNA during genetic recombination and DNA repair, while the RuvA-RuvB complex plays an important role in the rescue of blocked DNA replication forks via replication fork reversal (RFR). RuvA specifically binds to HJ cruciform DNA, conferring on it an open structure. The RuvB hexamer acts as an ATP-dependent pump, pulling dsDNA into and through the RuvAB complex. RuvB forms 2 homohexamers on either side of HJ DNA bound by 1 or 2 RuvA tetramers; 4 subunits per hexamer contact DNA at a time. Coordinated motions by a converter formed by DNA-disengaged RuvB subunits stimulates ATP hydrolysis and nucleotide exchange. Immobilization of the converter enables RuvB to convert the ATP-contained energy into a lever motion, pulling 2 nucleotides of DNA out of the RuvA tetramer per ATP hydrolyzed, thus driving DNA branch migration. The RuvB motors rotate together with the DNA substrate, which together with the progressing nucleotide cycle form the mechanistic basis for DNA recombination by continuous HJ branch migration. Branch migration allows RuvC to scan DNA until it finds its consensus sequence, where it cleaves and resolves cruciform DNA. This chain is Holliday junction branch migration complex subunit RuvB, found in Agrobacterium fabrum (strain C58 / ATCC 33970) (Agrobacterium tumefaciens (strain C58)).